The sequence spans 249 residues: Probable transcriptional regulatory protein OTBS_0251 (249 aa).

Belongs to the TACO1 family.

It is found in the cytoplasm. The polypeptide is Probable transcriptional regulatory protein OTBS_0251 (Orientia tsutsugamushi (strain Boryong) (Rickettsia tsutsugamushi)).